The following is a 206-amino-acid chain: Holliday junction branch migration complex subunit RuvA (206 aa).

Positions 1–68 are domain I; that stretch reads MITFVRGMLA…EDAMQLFGFL (68 aa). The interval 69–147 is domain II; sequence EPGERELFGQ…KWREESGLSA (79 aa). Positions 147 to 151 are flexible linker; sequence AMGAR. The segment at 152 to 206 is domain III; that stretch reads ASSRVYEEVELALLALGFAPGEVVRALDAVAPAMAGEEQTEAWLRAAIAWLSEQG.

This sequence belongs to the RuvA family. Homotetramer. Forms an RuvA(8)-RuvB(12)-Holliday junction (HJ) complex. HJ DNA is sandwiched between 2 RuvA tetramers; dsDNA enters through RuvA and exits via RuvB. An RuvB hexamer assembles on each DNA strand where it exits the tetramer. Each RuvB hexamer is contacted by two RuvA subunits (via domain III) on 2 adjacent RuvB subunits; this complex drives branch migration. In the full resolvosome a probable DNA-RuvA(4)-RuvB(12)-RuvC(2) complex forms which resolves the HJ.

It is found in the cytoplasm. Functionally, the RuvA-RuvB-RuvC complex processes Holliday junction (HJ) DNA during genetic recombination and DNA repair, while the RuvA-RuvB complex plays an important role in the rescue of blocked DNA replication forks via replication fork reversal (RFR). RuvA specifically binds to HJ cruciform DNA, conferring on it an open structure. The RuvB hexamer acts as an ATP-dependent pump, pulling dsDNA into and through the RuvAB complex. HJ branch migration allows RuvC to scan DNA until it finds its consensus sequence, where it cleaves and resolves the cruciform DNA. The sequence is that of Holliday junction branch migration complex subunit RuvA from Gloeobacter violaceus (strain ATCC 29082 / PCC 7421).